We begin with the raw amino-acid sequence, 634 residues long: Mitochondrial Rho GTPase 1 (634 aa).

At 1-604 the chain is on the cytoplasmic side; it reads MLCCMRICVC…PRSEEDVEGK (604 aa). The 170-residue stretch at 2 to 171 folds into the Miro 1 domain; sequence LCCMRICVCG…FFLCQKAVTH (170 aa). GTP is bound by residues 11-18, 60-64, and 116-119; these read GDEGTGKS, DTSAV, and NKSD. 2 consecutive EF-hand domains span residues 187 to 222 and 307 to 342; these read AAVAALQRIFYLSDKDRDGYLSDKEIKDFQMRCFEK and EGYRFFVNLFLLSDKDNDGGLNDAELASLFAPTPGL. 9 residues coordinate Ca(2+): Asp-200, Asp-202, Asp-204, Tyr-206, Glu-211, Asp-320, Asp-322, Asp-324, and Glu-331. The tract at residues 399 to 419 is disordered; the sequence is NPSTTAALKVTRPRKRRKRPG. Basic residues predominate over residues 409-419; sequence TRPRKRRKRPG. The region spanning 423 to 589 is the Miro 2 domain; that stretch reads RNVVLGHIVG…FVHIAEAAME (167 aa). GTP-binding positions include 432 to 439, 468 to 472, and 538 to 541; these read GAPGSGKS, ELPGG, and LKAD. Residues 605–625 form a helical; Anchor for type IV membrane protein membrane-spanning segment; it reads WMSWGIALGAVVCAGAAAVMI. Over 626–634 the chain is Mitochondrial intermembrane; the sequence is WRRVSGSGV.

Belongs to the mitochondrial Rho GTPase family.

The protein localises to the mitochondrion outer membrane. Its function is as follows. Mitochondrial GTPase involved in mitochondrial trafficking. Probably involved in control of anterograde transport of mitochondria and their subcellular distribution. This chain is Mitochondrial Rho GTPase 1 (gem1), found in Emericella nidulans (strain FGSC A4 / ATCC 38163 / CBS 112.46 / NRRL 194 / M139) (Aspergillus nidulans).